The following is a 161-amino-acid chain: Probable cell wall elongation regulator TseB (161 aa).

Topologically, residues M1 to A5 are cytoplasmic. The helical transmembrane segment at L6–I26 threads the bilayer. The Extracellular segment spans residues Y27–P161.

As to quaternary structure, interacts with the penicillin-binding protein PBP2A, a monofunctional transpeptidase.

The protein resides in the cell membrane. Functionally, required for normal cell shape. Plays an important role in cell wall elongation during exponential phase and spore outgrowth. Probably regulates the activity of the penicillin-binding protein PBP2A through a direct interaction. Not required for PBP2A activity, stability and localization. This chain is Probable cell wall elongation regulator TseB, found in Bacillus subtilis (strain 168).